Here is a 349-residue protein sequence, read N- to C-terminus: UDP-3-O-acylglucosamine N-acyltransferase (349 aa).

Histidine 246 functions as the Proton acceptor in the catalytic mechanism.

Belongs to the transferase hexapeptide repeat family. LpxD subfamily. As to quaternary structure, homotrimer.

The enzyme catalyses a UDP-3-O-[(3R)-3-hydroxyacyl]-alpha-D-glucosamine + a (3R)-hydroxyacyl-[ACP] = a UDP-2-N,3-O-bis[(3R)-3-hydroxyacyl]-alpha-D-glucosamine + holo-[ACP] + H(+). The protein operates within bacterial outer membrane biogenesis; LPS lipid A biosynthesis. In terms of biological role, catalyzes the N-acylation of UDP-3-O-acylglucosamine using 3-hydroxyacyl-ACP as the acyl donor. Is involved in the biosynthesis of lipid A, a phosphorylated glycolipid that anchors the lipopolysaccharide to the outer membrane of the cell. The protein is UDP-3-O-acylglucosamine N-acyltransferase of Protochlamydia amoebophila (strain UWE25).